The following is a 963-amino-acid chain: Collagen alpha-1(I) chain (963 aa).

The interval 1–963 (GPMGPSGPRG…PGPPGPPGPP (963 aa)) is disordered. Basic and acidic residues predominate over residues 40–54 (NGDDGEAGKPGRPGE). Ser-82 carries the post-translational modification Phosphoserine. 2 stretches are compositionally biased toward low complexity: residues 90–106 (DAGPAGPKGEPGSPGEN) and 129–142 (PAGARGNDGATGAA). Over residues 144–156 (PPGPTGPAGPPGF) the composition is skewed to pro residues. The span at 190–229 (AGAAGPAGNPGADGQPGAKGANGAPGIAGAPGFPGARGPS) shows a compositional bias: low complexity. Residues 296 to 305 (GERGGPGARG) show a composition bias toward gly residues. Low complexity-rich tracts occupy residues 313–337 (AGPKGPAGERGAPGPAGPKGSPGEA), 349–375 (KGITGSPGSPGPDGKTGPPGPAGQDGR), 384–403 (ARGQAGVMGFPGPKGAAGEP), 482–495 (PRGANGAPGNDGAK), 555–569 (SGPSGPAGPTGARGA), and 582–609 (AGFAGPPGADGQPGAKGEPGDAGAKGDA). Ser-558 carries the post-translational modification Phosphoserine. Residues 611 to 623 (PPGPAGPTGPPGP) show a composition bias toward pro residues. 3 stretches are compositionally biased toward low complexity: residues 638 to 654 (SAGPPGATGFPGAAGRV), 683 to 692 (ETGPAGRPGE), and 702 to 726 (AGEKGSPGADGPAGAPGTPGPQGIA). 2 stretches are compositionally biased toward pro residues: residues 767–777 (PPGPVGPPGIA) and 813–828 (AGPPGAPGAPGAPGPV). Over residues 849–863 (IGPVGARGPAGPQGP) the composition is skewed to low complexity. Positions 864–878 (RGDKGETGEQGDRGI) are enriched in basic and acidic residues. Residues 897–930 (PGEQGPSGASGPAGPRGPPGSAGAPGKDGINGIP) show a composition bias toward low complexity. The segment covering 948–963 (VGPPGPPGPPGPPGPP) has biased composition (pro residues).

Belongs to the fibrillar collagen family. In terms of assembly, trimers of one alpha 2(I) and two alpha 1(I) chains. Prolines at the third position of the tripeptide repeating unit (G-X-Y) are hydroxylated in some or all of the chains. In terms of tissue distribution, forms the fibrils of tendon, ligaments and bones. In bones, the fibrils are mineralized with calcium hydroxyapatite.

The protein localises to the secreted. The protein resides in the extracellular space. Its subcellular location is the extracellular matrix. In terms of biological role, type I collagen is a member of group I collagen (fibrillar forming collagen). This chain is Collagen alpha-1(I) chain, found in Tapirus terrestris (Lowland tapir).